The sequence spans 509 residues: Transcription factor SOX-9 (509 aa).

Disordered stretches follow at residues 1–67 and 160–273; these read MNLL…SEED and RLRV…FRDV. The segment covering 30–41 has biased composition (low complexity); sequence SAGSPCPSGSGS. Over residues 42–52 the composition is skewed to polar residues; that stretch reads DTENTRPQENT. Basic and acidic residues-rich tracts occupy residues 56–67 and 160–174; these read GEPDLKKESEED and RLRV…DYKY. Residues 63-103 are dimerization (DIM); it reads ESEEDKFPVCIREAVSQVLKGYDWTLVPMPVRVNGSSKNKP. Residues 63-103 form a PQA region; the sequence is ESEEDKFPVCIREAVSQVLKGYDWTLVPMPVRVNGSSKNKP. S64 is subject to Phosphoserine. The HMG box DNA-binding region spans 105-173; that stretch reads VKRPMNAFMV…QHKKDHPDYK (69 aa). S211 carries the post-translational modification Phosphoserine. The tract at residues 224–307 is transactivation domain (TAM); it reads PGEHSGQSQG…LPPNGHPGVP (84 aa). 2 short sequence motifs (9aaTAD) span residues 275–284 and 290–298; these read IGELSSDVIS and DVNEFDQYL. Residues 330 to 415 are disordered; sequence SAGHVWMSKQ…HYSEQQQHSP (86 aa). The span at 341–376 shows a compositional bias: pro residues; the sequence is APPPPPQQPPQAPPAPQAPPQPQAAPPQQPAAPPQQ. The span at 380–415 shows a compositional bias: polar residues; that stretch reads HTLTTLSSEPGQSQRTHIKTEQLSPSHYSEQQQHSP. The interval 394-509 is transactivation domain (TAC); sequence RTHIKTEQLS…QPVYTQLTRP (116 aa). A Glycyl lysine isopeptide (Lys-Gly) (interchain with G-Cter in ubiquitin) cross-link involves residue K398. Residues 460–468 carry the 9aaTAD 3 motif; the sequence is TGLYSTFTY. The interval 479–509 is disordered; it reads PIADTSGVPSIPQTHSPQHWEQPVYTQLTRP. A compositionally biased stretch (polar residues) spans 485–509; it reads GVPSIPQTHSPQHWEQPVYTQLTRP.

Homodimer; homodimerization is required for activity. Interacts (via C-terminus) with ZNF219; forming a complex that binds to the COL2A1 promoter and activates COL2A1 expression. Interacts with DDRGK1. Interacts with EP300/p300. Interacts with beta-catenin (CTNNB1); inhibiting CTNNB1 activity by competing with the binding sites of TCF/LEF within CTNNB1. Acetylated; acetylation impairs nuclear localization and ability to transactivate expression of target genes. Deacetylated by SIRT1. In terms of processing, phosphorylation at Ser-64 and Ser-211 by PKA increases transcriptional activity and may help delay chondrocyte maturation downstream of PTHLH/PTHrP signaling. Phosphorylation at either Ser-64 or Ser-211 is required for sumoylation, but phosphorylation is not dependent on sumoylation. Phosphorylated on tyrosine residues; tyrosine dephosphorylation by PTPN11/SHP2 blocks SOX9 phosphorylation by PKA and subsequent SUMOylation. Post-translationally, ubiquitinated; ubiquitination leads to proteasomal degradation and is negatively regulated by DDRGK1. Sumoylated; phosphorylation at either Ser-64 or Ser-211 is required for sumoylation. Sumoylation is induced by BMP signaling pathway.

It is found in the nucleus. Its function is as follows. Transcription factor that plays a key role in chondrocytes differentiation and skeletal development. Specifically binds the 5'-ACAAAG-3' DNA motif present in enhancers and super-enhancers and promotes expression of genes important for chondrogenesis, including cartilage matrix protein-coding genes COL2A1, COL4A2, COL9A1, COL11A2 and ACAN, SOX5 and SOX6. Also binds to some promoter regions. Plays a central role in successive steps of chondrocyte differentiation. Absolutely required for precartilaginous condensation, the first step in chondrogenesis during which skeletal progenitors differentiate into prechondrocytes. Together with SOX5 and SOX6, required for overt chondrogenesis when condensed prechondrocytes differentiate into early stage chondrocytes, the second step in chondrogenesis. Later, required to direct hypertrophic maturation and block osteoblast differentiation of growth plate chondrocytes: maintains chondrocyte columnar proliferation, delays prehypertrophy and then prevents osteoblastic differentiation of chondrocytes by lowering beta-catenin (CTNNB1) signaling and RUNX2 expression. Also required for chondrocyte hypertrophy, both indirectly, by keeping the lineage fate of chondrocytes, and directly, by remaining present in upper hypertrophic cells and transactivating COL10A1 along with MEF2C. Low lipid levels are the main nutritional determinant for chondrogenic commitment of skeletal progenitor cells: when lipids levels are low, FOXO (FOXO1 and FOXO3) transcription factors promote expression of SOX9, which induces chondrogenic commitment and suppresses fatty acid oxidation. Mechanistically, helps, but is not required, to remove epigenetic signatures of transcriptional repression and deposit active promoter and enhancer marks at chondrocyte-specific genes. Acts in cooperation with the Hedgehog pathway-dependent GLI (GLI1 and GLI3) transcription factors. In addition to cartilage development, also acts as a regulator of proliferation and differentiation in epithelial stem/progenitor cells: involved in the lung epithelium during branching morphogenesis, by balancing proliferation and differentiation and regulating the extracellular matrix. Controls epithelial branching during kidney development. In Homo sapiens (Human), this protein is Transcription factor SOX-9.